Here is a 239-residue protein sequence, read N- to C-terminus: Ribosomal RNA large subunit methyltransferase E (239 aa).

Positions 1-20 (MTKAPIAGNRTGRKLGQRVK) are disordered. Positions 11–20 (TGRKLGQRVK) are enriched in basic residues. 5 residues coordinate S-adenosyl-L-methionine: Gly81, Trp83, Asp104, Asp120, and Asp144. Residue Lys184 is the Proton acceptor of the active site.

This sequence belongs to the class I-like SAM-binding methyltransferase superfamily. RNA methyltransferase RlmE family.

It is found in the cytoplasm. It carries out the reaction uridine(2552) in 23S rRNA + S-adenosyl-L-methionine = 2'-O-methyluridine(2552) in 23S rRNA + S-adenosyl-L-homocysteine + H(+). In terms of biological role, specifically methylates the uridine in position 2552 of 23S rRNA at the 2'-O position of the ribose in the fully assembled 50S ribosomal subunit. The protein is Ribosomal RNA large subunit methyltransferase E of Rhizobium johnstonii (strain DSM 114642 / LMG 32736 / 3841) (Rhizobium leguminosarum bv. viciae).